Reading from the N-terminus, the 209-residue chain is MKKAIIGRKLGMTQIFDENNRVVPVTVVEAGPCTVVQKKSVEKDGYEAIQVGYGEIREKLVNKPLKGHFEKAGVGLSRMLREFKLENVSEYQVGQEIKVDIFEAGEKIDVTGTSKGKGYQGIIKRWNAHRGPMSHGSKFHRAVGSMGAASYPARTFKNKRMAGHMGNVKSTVLNLEVVKTIPEKNLILIKGGIPGPNKGYVIIRNSIKA.

It belongs to the universal ribosomal protein uL3 family. In terms of assembly, part of the 50S ribosomal subunit. Forms a cluster with proteins L14 and L19.

Its function is as follows. One of the primary rRNA binding proteins, it binds directly near the 3'-end of the 23S rRNA, where it nucleates assembly of the 50S subunit. The sequence is that of Large ribosomal subunit protein uL3 from Clostridium tetani (strain Massachusetts / E88).